The primary structure comprises 732 residues: Aldehyde oxidoreductase molybdenum-binding subunit PaoC (732 aa).

Residues 241–242, 468–470, 511–512, 615–621, Gln-625, and 688–691 contribute to the Mo-molybdopterin cytosine dinucleotide site; these read GF, IGT, GA, RILNPKT, and KGVG. Glu-692 functions as the Proton acceptor in the catalytic mechanism.

The protein belongs to the xanthine dehydrogenase family. Heterotrimer composed of PaoA, PaoB and PaoC. Requires Mo-molybdopterin cytosine dinucleotide as cofactor.

It localises to the periplasm. The catalysed reaction is an aldehyde + A + H2O = a carboxylate + AH2 + H(+). With respect to regulation, the complex requires PaoD for activity. Its function is as follows. Oxidizes aldehydes to the corresponding carboxylic acids with a preference for aromatic aldehydes. It might play a role in the detoxification of aldehydes to avoid cell damage. The sequence is that of Aldehyde oxidoreductase molybdenum-binding subunit PaoC from Escherichia coli (strain K12).